We begin with the raw amino-acid sequence, 188 residues long: Probable RNA 2'-phosphotransferase (188 aa).

This sequence belongs to the KptA/TPT1 family.

In terms of biological role, removes the 2'-phosphate from RNA via an intermediate in which the phosphate is ADP-ribosylated by NAD followed by a presumed transesterification to release the RNA and generate ADP-ribose 1''-2''-cyclic phosphate (APPR&gt;P). May function as an ADP-ribosylase. The sequence is that of Probable RNA 2'-phosphotransferase from Pseudomonas savastanoi pv. phaseolicola (strain 1448A / Race 6) (Pseudomonas syringae pv. phaseolicola (strain 1448A / Race 6)).